The following is a 600-amino-acid chain: Long-chain-fatty-acid--CoA ligase FadD15 (600 aa).

This sequence belongs to the ATP-dependent AMP-binding enzyme family.

The catalysed reaction is a long-chain fatty acid + ATP + CoA = a long-chain fatty acyl-CoA + AMP + diphosphate. It functions in the pathway lipid metabolism; fatty acid biosynthesis. Catalyzes the activation of long-chain fatty acids as acyl-coenzyme A (acyl-CoA), which are then transferred to the multifunctional polyketide synthase (PKS) type III for further chain extension. The chain is Long-chain-fatty-acid--CoA ligase FadD15 (fadD15) from Mycobacterium bovis (strain ATCC BAA-935 / AF2122/97).